Reading from the N-terminus, the 199-residue chain is Large ribosomal subunit protein eL13B (199 aa).

A phosphothreonine mark is found at Thr144 and Thr152.

Belongs to the eukaryotic ribosomal protein eL13 family. As to quaternary structure, component of the large ribosomal subunit (LSU). Mature yeast ribosomes consist of a small (40S) and a large (60S) subunit. The 40S small subunit contains 1 molecule of ribosomal RNA (18S rRNA) and 33 different proteins (encoded by 57 genes). The large 60S subunit contains 3 rRNA molecules (25S, 5.8S and 5S rRNA) and 46 different proteins (encoded by 81 genes).

It is found in the cytoplasm. Functionally, component of the ribosome, a large ribonucleoprotein complex responsible for the synthesis of proteins in the cell. The small ribosomal subunit (SSU) binds messenger RNAs (mRNAs) and translates the encoded message by selecting cognate aminoacyl-transfer RNA (tRNA) molecules. The large subunit (LSU) contains the ribosomal catalytic site termed the peptidyl transferase center (PTC), which catalyzes the formation of peptide bonds, thereby polymerizing the amino acids delivered by tRNAs into a polypeptide chain. The nascent polypeptides leave the ribosome through a tunnel in the LSU and interact with protein factors that function in enzymatic processing, targeting, and the membrane insertion of nascent chains at the exit of the ribosomal tunnel. The polypeptide is Large ribosomal subunit protein eL13B (Saccharomyces cerevisiae (strain ATCC 204508 / S288c) (Baker's yeast)).